Here is a 179-residue protein sequence, read N- to C-terminus: ATP synthase subunit b (179 aa).

Residues 23–43 (IVVGLVAFGLLAFVLMKFVFP) form a helical membrane-spanning segment.

This sequence belongs to the ATPase B chain family. F-type ATPases have 2 components, F(1) - the catalytic core - and F(0) - the membrane proton channel. F(1) has five subunits: alpha(3), beta(3), gamma(1), delta(1), epsilon(1). F(0) has three main subunits: a(1), b(2) and c(10-14). The alpha and beta chains form an alternating ring which encloses part of the gamma chain. F(1) is attached to F(0) by a central stalk formed by the gamma and epsilon chains, while a peripheral stalk is formed by the delta and b chains.

The protein localises to the cell membrane. Its function is as follows. F(1)F(0) ATP synthase produces ATP from ADP in the presence of a proton or sodium gradient. F-type ATPases consist of two structural domains, F(1) containing the extramembraneous catalytic core and F(0) containing the membrane proton channel, linked together by a central stalk and a peripheral stalk. During catalysis, ATP synthesis in the catalytic domain of F(1) is coupled via a rotary mechanism of the central stalk subunits to proton translocation. Functionally, component of the F(0) channel, it forms part of the peripheral stalk, linking F(1) to F(0). This chain is ATP synthase subunit b, found in Salinispora arenicola (strain CNS-205).